The following is a 1088-amino-acid chain: MGKYNLILSEYLSFIYNSQSAVQIPIYYSSNSELENRCIEFHSKCLENSKNGLSLKKLFVEYSDVMENATLLSILSYSYDKYNAVERKLVKYAKGKPLEADLTVNELDYENNKITSELFPTAEEYTDSLMDPAILTSLSSNLNAVMFWLEKHENDVAEKLKIYKRRLDLFTIVASTVNKYGVPRHNAKYRYEYEVMKDKPYYLVTWANSSIEMLMSVFSHEDYLIARELIVLSYSNRSTLAKLVSSPMSILVALVDINGTFITNEELELEFSNKYVRAIVPDQTFDELKQMLDNMRKAGLTDIPKMIQDWLVDCSIEKFPLMAKIYSWSFHVGFRKQKMLDAALDQLKTEYTEDVDDEMYREYTMLIRDEVVKMLEEPVKHDDHLLQDSELAGLLSMSSASNGESRQLKFGRKTIFSTKKNMHVMDDMANGRYTPGIIPPVNVDKPIPLGRRDVPGRRTRIIFILPYEYFIAQHAVVEKMLIYAKHTREYAEFYSQSNQLLSYGDVTRFLSNNSMVLYTDVSQWDSSQHNTQPFRKGIIMGLDMLANMTNDARVIQTLNLYKQTQINLMDSYVQIPDGNVIKKIQYGAVASGEKQTKAANSIANLALIKTVLSRISNKYSFATKIIRVDGDDNYAVLQFNTEVTEQMVQDVSNDVRETYARMNAKVKALVSTVGIEIAKRYIAGGKIFFRAGINLLNNEKRGQSTQWDQAAVLYSNYIVNRLRGFETDREFILTKIMQMTSVAITGSLRLFPSERVLTTNSTFKVFDSEDFIIEYGTTDDEVYIQRAFMSLSSQKSGIADEIAASSTFKNYVSRLSGQLLFSKNNIVSRGIALTEKAKLNSYAPISLEKRRAQISALLTMLQKPVTFKSSKITINDILRDIKPFFTVNEAHLPIQYQKFMPTLPDNVQYIIQCIGSRTYQIEDDGSKSAISRLISKYSVYKPSIEELYKVISLHENEIQLYLISLGIPKIDADTYVGSKIYSQDKYRILESYVCNLLSINYGCYQLFDFNSPDLEKLIRIPFKGKIPAVTFILHLYAKLEVINHAIKNGSWISLFCNYPKSEMIKLWKKMWNITSLRSPYTNANFFQD.

One can recognise a RdRp catalytic domain in the interval 501–687 (LSYGDVTRFL…AKRYIAGGKI (187 aa)).

This sequence belongs to the reoviridae RNA-directed RNA polymerase family. As to quaternary structure, interacts with VP3 (Potential). Interacts with VP2; this interaction activates VP1. Interacts with NSP5; this interaction is probably necessary for the formation of functional virus factories. Interacts with NSP2; this interaction is weak. It depends on Mg(2+) as a cofactor.

It is found in the virion. It carries out the reaction RNA(n) + a ribonucleoside 5'-triphosphate = RNA(n+1) + diphosphate. Its function is as follows. RNA-directed RNA polymerase that is involved in both transcription and genome replication. Together with VP3 capping enzyme, forms an enzyme complex positioned near the channels situated at each of the five-fold vertices of the core. Following infection, the outermost layer of the virus is lost, leaving a double-layered particle (DLP) made up of the core and VP6 shell. VP1 then catalyzes the transcription of fully conservative plus-strand genomic RNAs that are extruded through the DLP's channels into the cytoplasm where they function as mRNAs for translation of viral proteins. One copy of each of the viral (+)RNAs is also recruited during core assembly, together with newly synthesized polymerase complexes and VP2. The polymerase of these novo-formed particles catalyzes the synthesis of complementary minus-strands leading to dsRNA formation. To do so, the polymerase specifically recognizes and binds 4 bases 5'-UGUG-3' in the conserved 3'-sequence of plus-strand RNA templates. VP2 presumably activates the autoinhibited VP1-RNA complex to coordinate packaging and genome replication. Once dsRNA synthesis is complete, the polymerase switches to the transcriptional mode, thus providing secondary transcription. This Bos taurus (Bovine) protein is RNA-directed RNA polymerase.